Consider the following 868-residue polypeptide: DNA mismatch repair protein MutS (868 aa).

620–627 (GPNMGGKS) serves as a coordination point for ATP.

It belongs to the DNA mismatch repair MutS family.

Its function is as follows. This protein is involved in the repair of mismatches in DNA. It is possible that it carries out the mismatch recognition step. This protein has a weak ATPase activity. In Desulforamulus reducens (strain ATCC BAA-1160 / DSM 100696 / MI-1) (Desulfotomaculum reducens), this protein is DNA mismatch repair protein MutS.